Reading from the N-terminus, the 226-residue chain is Putative N-acetylmannosamine-6-phosphate 2-epimerase 1 (226 aa).

Belongs to the NanE family.

The enzyme catalyses an N-acyl-D-glucosamine 6-phosphate = an N-acyl-D-mannosamine 6-phosphate. Its pathway is amino-sugar metabolism; N-acetylneuraminate degradation; D-fructose 6-phosphate from N-acetylneuraminate: step 3/5. In terms of biological role, converts N-acetylmannosamine-6-phosphate (ManNAc-6-P) to N-acetylglucosamine-6-phosphate (GlcNAc-6-P). The chain is Putative N-acetylmannosamine-6-phosphate 2-epimerase 1 from Salmonella paratyphi A (strain ATCC 9150 / SARB42).